Here is a 77-residue protein sequence, read N- to C-terminus: Exodeoxyribonuclease 7 small subunit (77 aa).

This sequence belongs to the XseB family. In terms of assembly, heterooligomer composed of large and small subunits.

The protein resides in the cytoplasm. The catalysed reaction is Exonucleolytic cleavage in either 5'- to 3'- or 3'- to 5'-direction to yield nucleoside 5'-phosphates.. Functionally, bidirectionally degrades single-stranded DNA into large acid-insoluble oligonucleotides, which are then degraded further into small acid-soluble oligonucleotides. The chain is Exodeoxyribonuclease 7 small subunit from Clostridium acetobutylicum (strain ATCC 824 / DSM 792 / JCM 1419 / IAM 19013 / LMG 5710 / NBRC 13948 / NRRL B-527 / VKM B-1787 / 2291 / W).